A 462-amino-acid chain; its full sequence is NAD(P) transhydrogenase subunit beta (462 aa).

Residues 1-3 (MSG) are Periplasmic-facing. Residues 4–24 (GLVTAAYIVAAILFIFSLAGL) form a helical membrane-spanning segment. Over 25 to 45 (SKHETSRQGNNFGIAGMAIAL) the chain is Cytoplasmic. Residues 46 to 66 (IATIFGPDTGNVGWILLAMVI) form a helical membrane-spanning segment. Residues 67 to 82 (GGAIGIRLAKKVEMTE) lie on the Periplasmic side of the membrane. A helical transmembrane segment spans residues 83–103 (MPELVAILHSFVGLAAVLVGF). The Cytoplasmic segment spans residues 104–115 (NSYLHHDAGMAP). A helical membrane pass occupies residues 116–136 (ILVNIHLTEVFLGIFIGAVTF). The Periplasmic portion of the chain corresponds to 137–164 (TGSVVAFGKLCGKISSKPLMLPNRHKMN). The helical transmembrane segment at 165-185 (LAALVVSFLLLIVFVRTDSVG) threads the bilayer. Residues 186 to 188 (LQV) lie on the Cytoplasmic side of the membrane. Residues 189–209 (LALLIMTAIALVFGWHLVASI) form a helical membrane-spanning segment. Residues 210–215 (GGADMP) are Periplasmic-facing. The chain crosses the membrane as a helical span at residues 216–236 (VVVSMLNSYSGWAAAAAGFML). The Cytoplasmic segment spans residues 237–239 (SND). Residues 240–260 (LLIVTGALVGSSGAILSYIMC) traverse the membrane as a helical segment. Residues 261–308 (KAMNRSFISVIAGGFGTDGSSTGDDQEVGEHREITAEETAELLKNSHS) are Periplasmic-facing. Residues 309–329 (VIITPGYGMAVAQAQYPVAEI) traverse the membrane as a helical segment. Residues 330 to 462 (TEKLRARGIN…ASVDAILKAL (133 aa)) lie on the Cytoplasmic side of the membrane.

Belongs to the PNT beta subunit family. Heterodimer of an alpha and a beta chain.

It localises to the cell inner membrane. The enzyme catalyses NAD(+) + NADPH + H(+)(in) = NADH + NADP(+) + H(+)(out). Functionally, the transhydrogenation between NADH and NADP is coupled to respiration and ATP hydrolysis and functions as a proton pump across the membrane. The protein is NAD(P) transhydrogenase subunit beta (pntB) of Escherichia coli O157:H7.